Here is a 102-residue protein sequence, read N- to C-terminus: ATP synthase subunit c (102 aa).

The next 2 membrane-spanning stretches (helical) occupy residues 34–54 (IGAGVTMIAGSTVGIGQGYIF) and 80–100 (AVSESTAIYGLLISFILIFVA).

The protein belongs to the ATPase C chain family. In terms of assembly, F-type ATPases have 2 components, F(1) - the catalytic core - and F(0) - the membrane proton channel. F(1) has five subunits: alpha(3), beta(3), gamma(1), delta(1), epsilon(1). F(0) has three main subunits: a(1), b(2) and c(10-14). The alpha and beta chains form an alternating ring which encloses part of the gamma chain. F(1) is attached to F(0) by a central stalk formed by the gamma and epsilon chains, while a peripheral stalk is formed by the delta and b chains.

Its subcellular location is the cell membrane. F(1)F(0) ATP synthase produces ATP from ADP in the presence of a proton or sodium gradient. F-type ATPases consist of two structural domains, F(1) containing the extramembraneous catalytic core and F(0) containing the membrane proton channel, linked together by a central stalk and a peripheral stalk. During catalysis, ATP synthesis in the catalytic domain of F(1) is coupled via a rotary mechanism of the central stalk subunits to proton translocation. Its function is as follows. Key component of the F(0) channel; it plays a direct role in translocation across the membrane. A homomeric c-ring of between 10-14 subunits forms the central stalk rotor element with the F(1) delta and epsilon subunits. This is ATP synthase subunit c from Mycoplasma genitalium (strain ATCC 33530 / DSM 19775 / NCTC 10195 / G37) (Mycoplasmoides genitalium).